Reading from the N-terminus, the 410-residue chain is Digeranylgeranylglycerophospholipid reductase (410 aa).

6 residues coordinate FAD: Ala-15, Glu-34, Val-118, Asp-286, Gly-298, and Ile-299. Residues Lys-343 and Ala-379 each contribute to the a 2,3-bis-O-(geranylgeranyl)-sn-glycerol 1-phospholipid site.

It belongs to the geranylgeranyl reductase family. DGGGPL reductase subfamily. FAD serves as cofactor.

It catalyses the reaction a 2,3-bis-O-phytanyl-sn-glycerol 1-phospholipid + 8 A = a 2,3-bis-O-(geranylgeranyl)-sn-glycerol 1-phospholipid + 8 AH2. The enzyme catalyses 2,3-bis-O-(phytanyl)-sn-glycerol 1-phosphate + 8 A = 2,3-bis-O-(geranylgeranyl)-sn-glycerol 1-phosphate + 8 AH2. It carries out the reaction CDP-2,3-bis-O-(geranylgeranyl)-sn-glycerol + 8 AH2 = CDP-2,3-bis-O-(phytanyl)-sn-glycerol + 8 A. The catalysed reaction is archaetidylserine + 8 AH2 = 2,3-bis-O-phytanyl-sn-glycero-3-phospho-L-serine + 8 A. Its pathway is membrane lipid metabolism; glycerophospholipid metabolism. In terms of biological role, is involved in the reduction of 2,3-digeranylgeranylglycerophospholipids (unsaturated archaeols) into 2,3-diphytanylglycerophospholipids (saturated archaeols) in the biosynthesis of archaeal membrane lipids. Can fully reduce the unsaturated isoprenoid side chains of membrane phospholipids and glycolipids. Is also able to reduce the omega-position isoprene of dolichol phosphate. In Haloferax volcanii (strain ATCC 29605 / DSM 3757 / JCM 8879 / NBRC 14742 / NCIMB 2012 / VKM B-1768 / DS2) (Halobacterium volcanii), this protein is Digeranylgeranylglycerophospholipid reductase.